Consider the following 950-residue polypeptide: Leucine--tRNA ligase (950 aa).

Residues 66–77 (PYPSGAGLHVGH) carry the 'HIGH' region motif. The short motif at 721 to 725 (KIGKS) is the 'KMSKS' region element. Lys724 is a binding site for ATP.

The protein belongs to the class-I aminoacyl-tRNA synthetase family.

The protein localises to the cytoplasm. The enzyme catalyses tRNA(Leu) + L-leucine + ATP = L-leucyl-tRNA(Leu) + AMP + diphosphate. This chain is Leucine--tRNA ligase, found in Nocardia farcinica (strain IFM 10152).